Consider the following 276-residue polypeptide: NH(3)-dependent NAD(+) synthetase (276 aa).

Position 43–50 (43–50) interacts with ATP; sequence GISGGVDS. Asp49 contacts Mg(2+). Arg146 is a binding site for deamido-NAD(+). ATP is bound at residue Thr166. Residue Glu171 participates in Mg(2+) binding. Lys179 and Asp186 together coordinate deamido-NAD(+). 2 residues coordinate ATP: Lys195 and Thr217. 266 to 267 provides a ligand contact to deamido-NAD(+); the sequence is HK.

Belongs to the NAD synthetase family. Homodimer.

The enzyme catalyses deamido-NAD(+) + NH4(+) + ATP = AMP + diphosphate + NAD(+) + H(+). Its pathway is cofactor biosynthesis; NAD(+) biosynthesis; NAD(+) from deamido-NAD(+) (ammonia route): step 1/1. Functionally, catalyzes the ATP-dependent amidation of deamido-NAD to form NAD. Uses ammonia as a nitrogen source. This chain is NH(3)-dependent NAD(+) synthetase, found in Aliivibrio fischeri (strain ATCC 700601 / ES114) (Vibrio fischeri).